We begin with the raw amino-acid sequence, 96 residues long: uncharacterized protein (96 aa).

This sequence belongs to the NifU family.

This is an uncharacterized protein from Azotobacter vinelandii.